The sequence spans 177 residues: MSRVAKAPVVIPAGVEVKLNGQVISIKGKNGELTRTVHSAVEVKQEENTLTFAPREGAVDGWAQAGTTRALLNSMVIGVTEGFTKKLQLVGVGYRAAVKGNVVNLALGFSHPVDHELPAGITAECPTQTEIVLKGADKQVIGQVAADLRAYRRPEPYKGKGVRYADEVVRTKEAKKK.

Belongs to the universal ribosomal protein uL6 family. Part of the 50S ribosomal subunit.

Its function is as follows. This protein binds to the 23S rRNA, and is important in its secondary structure. It is located near the subunit interface in the base of the L7/L12 stalk, and near the tRNA binding site of the peptidyltransferase center. The sequence is that of Large ribosomal subunit protein uL6 from Yersinia pseudotuberculosis serotype O:1b (strain IP 31758).